The primary structure comprises 484 residues: Transmembrane protein 161B (484 aa).

A helical membrane pass occupies residues 108–128 (LVDFTVAATVVYLITELYFCV). The N-linked (GlcNAc...) asparagine glycan is linked to N136. The next 2 helical transmembrane spans lie at 137-157 (ISVV…FSLT) and 170-190 (SLCI…LIVT). The N-linked (GlcNAc...) asparagine glycan is linked to N204. Helical transmembrane passes span 229 to 249 (FKLI…FPGL), 266 to 286 (VTQT…LLWV), 368 to 388 (VFYY…MLLH), and 456 to 476 (LSFF…FGLF).

The protein belongs to the TMEM161 family.

It is found in the cell membrane. In terms of biological role, essential for maintaining normal cardiac rhythm in the developing heart and for neonatal survival. Inhibits potassium and calcium currents in the cardiomyocytes, this assists in timely action potential repolarization and thereby maintains normal cardiac rhythm. The chain is Transmembrane protein 161B (tmem161b) from Danio rerio (Zebrafish).